The chain runs to 153 residues: FAD synthase (153 aa).

Residues 9-10, 14-17, and Asp-92 each bind ATP; these read TF and HPGH.

It belongs to the archaeal FAD synthase family. As to quaternary structure, homodimer. Requires a divalent metal cation as cofactor.

The enzyme catalyses FMN + ATP + H(+) = FAD + diphosphate. Its pathway is cofactor biosynthesis; FAD biosynthesis; FAD from FMN: step 1/1. Catalyzes the transfer of the AMP portion of ATP to flavin mononucleotide (FMN) to produce flavin adenine dinucleotide (FAD) coenzyme. The polypeptide is FAD synthase (Halorubrum lacusprofundi (strain ATCC 49239 / DSM 5036 / JCM 8891 / ACAM 34)).